Consider the following 560-residue polypeptide: Probable 2,3-bisphosphoglycerate-independent phosphoglycerate mutase 2 (560 aa).

At glycine 2 the chain carries N-acetylglycine. Mn(2+) contacts are provided by aspartate 29 and serine 82. Serine 82 (phosphoserine intermediate) is an active-site residue. Residues histidine 141, arginine 171 to aspartate 172, arginine 207, arginine 214, arginine 287 to arginine 290, and lysine 362 contribute to the substrate site. Mn(2+) is bound by residues aspartate 431, histidine 435, aspartate 472, histidine 473, and histidine 502.

Belongs to the BPG-independent phosphoglycerate mutase family. In terms of assembly, monomer. Mn(2+) serves as cofactor.

It localises to the cytoplasm. It catalyses the reaction (2R)-2-phosphoglycerate = (2R)-3-phosphoglycerate. It functions in the pathway carbohydrate degradation; glycolysis; pyruvate from D-glyceraldehyde 3-phosphate: step 3/5. Its function is as follows. Catalyzes the interconversion of 2-phosphoglycerate (2-PGA) and 3-phosphoglycerate (3-PGA). Required for guard cell function (e.g. blue light-, abscisic acid- (ABA), and low CO(2)-regulated stomatal movements) and fertility (e.g. pollen grains production). This chain is Probable 2,3-bisphosphoglycerate-independent phosphoglycerate mutase 2 (PGM2), found in Arabidopsis thaliana (Mouse-ear cress).